Reading from the N-terminus, the 111-residue chain is Nucleoid-associated protein Teth514_0034 (111 aa).

It belongs to the YbaB/EbfC family. As to quaternary structure, homodimer.

Its subcellular location is the cytoplasm. The protein resides in the nucleoid. In terms of biological role, binds to DNA and alters its conformation. May be involved in regulation of gene expression, nucleoid organization and DNA protection. This Thermoanaerobacter sp. (strain X514) protein is Nucleoid-associated protein Teth514_0034.